The following is a 281-amino-acid chain: MAEQQNPFSIKSKARFSLGAIALTLTLVLLNIAVYFYQIVFASPLDSRESNLILFGANIYQLSLTGDWWRYPISMMLHSNGTHLAFNCLALFVIGIGCERAYGKFKLLAIYIISGIGAALFSAYWQYYEISNSDLWTDSTVYITIGVGASGAIMGIAAASVIYLIKVVINKPNPHPVIQRRQKYQLYNLIAMIALTLINGLQSGVDNAAHIGGAIIGALISIAYILVPHKLRVANLCITVIAASLLTMMIYLYSFSTNKHLLEEREFIYQEVYTELADANQ.

The next 7 helical transmembrane spans lie at 16–36 (FSLGAIALTLTLVLLNIAVYF), 76–96 (MLHSNGTHLAFNCLALFVIGI), 105–125 (FKLLAIYIISGIGAALFSAYW), 145–165 (IGVGASGAIMGIAAASVIYLI), 185–205 (QLYNLIAMIALTLINGLQSGV), 208–228 (AAHIGGAIIGALISIAYILVP), and 233–253 (VANLCITVIAASLLTMMIYLY). S150 (nucleophile) is an active-site residue. Catalysis depends on H210, which acts as the Charge relay system.

The protein belongs to the peptidase S54 family.

Its subcellular location is the cell membrane. The catalysed reaction is Cleaves type-1 transmembrane domains using a catalytic dyad composed of serine and histidine that are contributed by different transmembrane domains.. Its function is as follows. Rhomboid serine protease that catalyzes intramembrane proteolysis. Mediates quorum-sensing and the subsequent regulation of target genes via activation of the Tat protein export system. Catalyzes the proteolytic activation of TatA by removal of its N-terminal extension. The sequence is that of Rhomboid protease AarA (aarA) from Providencia stuartii.